A 213-amino-acid chain; its full sequence is ATP phosphoribosyltransferase (213 aa).

The protein belongs to the ATP phosphoribosyltransferase family. Short subfamily. In terms of assembly, heteromultimer composed of HisG and HisZ subunits.

The protein localises to the cytoplasm. It carries out the reaction 1-(5-phospho-beta-D-ribosyl)-ATP + diphosphate = 5-phospho-alpha-D-ribose 1-diphosphate + ATP. Its pathway is amino-acid biosynthesis; L-histidine biosynthesis; L-histidine from 5-phospho-alpha-D-ribose 1-diphosphate: step 1/9. Its function is as follows. Catalyzes the condensation of ATP and 5-phosphoribose 1-diphosphate to form N'-(5'-phosphoribosyl)-ATP (PR-ATP). Has a crucial role in the pathway because the rate of histidine biosynthesis seems to be controlled primarily by regulation of HisG enzymatic activity. The polypeptide is ATP phosphoribosyltransferase (Crocosphaera subtropica (strain ATCC 51142 / BH68) (Cyanothece sp. (strain ATCC 51142))).